The following is a 351-amino-acid chain: Putative [LysW]-L-2-aminoadipate/[LysW]-L-glutamate phosphate reductase (351 aa).

NADP(+) contacts are provided by residues 10 to 13 (SGFT) and 34 to 36 (SRK). Residue cysteine 151 is part of the active site. Residue asparagine 318 participates in NADP(+) binding.

This sequence belongs to the NAGSA dehydrogenase family. Type 1 subfamily. LysY sub-subfamily.

It localises to the cytoplasm. The enzyme catalyses [amino-group carrier protein]-C-terminal-N-(1-carboxy-5-oxopentan-1-yl)-L-glutamine + phosphate + NADP(+) = [amino-group carrier protein]-C-terminal-N-(1-carboxy-5-phosphooxy-5-oxopentan-1-yl)-L-glutamine + NADPH + H(+). It carries out the reaction [amino-group carrier protein]-C-terminal-gamma-(L-glutamyl-5-semialdehyde)-L-glutamate + phosphate + NADP(+) = [amino-group carrier protein]-C-terminal-gamma-(5-phospho-L-glutamyl)-L-glutamate + NADPH + H(+). The protein operates within amino-acid biosynthesis; L-lysine biosynthesis via AAA pathway; L-lysine from L-alpha-aminoadipate (Thermus route): step 3/5. It participates in amino-acid biosynthesis; L-arginine biosynthesis. In terms of biological role, involved in both the arginine and lysine biosynthetic pathways. This chain is Putative [LysW]-L-2-aminoadipate/[LysW]-L-glutamate phosphate reductase, found in Pyrobaculum calidifontis (strain DSM 21063 / JCM 11548 / VA1).